A 936-amino-acid polypeptide reads, in one-letter code: Coiled-coil domain-containing protein 191 (936 aa).

2 coiled-coil regions span residues R189–A270 and R364–A440. The segment at L495 to S541 is disordered. Polar residues-rich tracts occupy residues R497–G516 and P527–S541. Residues N554–A592 adopt a coiled-coil conformation. Disordered regions lie at residues L607–P656 and K691–E714. Residues E662–I739 are a coiled coil.

In Homo sapiens (Human), this protein is Coiled-coil domain-containing protein 191 (CCDC191).